The following is a 344-amino-acid chain: L-rhamnose-proton symporter (344 aa).

10 consecutive transmembrane segments (helical) span residues 5 to 25, 38 to 58, 72 to 92, 101 to 121, 137 to 157, 175 to 195, 214 to 234, 259 to 279, 289 to 309, and 323 to 343; these read ILLGIFWHFVGATSAACFYAP, WAIAGIFSWILLPWGISYWLL, ILLPVFLFGAMWGIGNIGYGL, MGIGIAIGITLIVGTLMTPII, TLIGVVIAVVGVAVVSYAGLL, LALAVMCGIFSAGMSFAMSAA, LPSYVVIMGGGAIINLGFCII, ILFSALGGIMWYFQFFFYAWG, FMSWMLHMSFYVLCGGIVGLL, and VLCIGCLIIVLAANIVGLGMA.

This sequence belongs to the L-rhamnose transporter (TC 2.A.7.6) family.

It is found in the cell inner membrane. It carries out the reaction L-rhamnopyranose(in) + H(+)(in) = L-rhamnopyranose(out) + H(+)(out). In terms of biological role, uptake of L-rhamnose across the cytoplasmic membrane with the concomitant transport of protons into the cell (symport system). This is L-rhamnose-proton symporter from Mannheimia succiniciproducens (strain KCTC 0769BP / MBEL55E).